The chain runs to 253 residues: MALSMPLNGLKEEDKEPLIELFVKAGSDGESIGNCPFSQRLFMILWLKGVVFSVTTVDLKRKPAHLQNLAPGTHPPFITFNSEVKTDVNKIEEFLEEVLCPPKYLKLSPKHPESNTAGMDIFAKFSAYIKNSRPEANEALERGLLKTLQKLDEYLNSPLPGEIDENSMEDIKSSTRRFLDGDEMTLADCNLLPKLHIVKVVAKKYRNFDIPKGMTGIWRYLTNAYSRDEFTNTCPSDKEVEIAYSDVAKRLTK.

The residue at position 2 (Ala-2) is an N-acetylalanine. The tract at residues 2 to 101 (ALSMPLNGLK…EEFLEEVLCP (100 aa)) is required for insertion into the membrane. Position 4 is a phosphoserine (Ser-4). Residue Lys-24 is modified to N6-acetyllysine. The short motif at 35-38 (CPFS) is the G-site element. The chain crosses the membrane as a helical span at residues 37–57 (FSQRLFMILWLKGVVFSVTTV). Residues 81 to 244 (NSEVKTDVNK…PSDKEVEIAY (164 aa)) form the GST C-terminal domain. Residue Lys-130 is modified to N6-acetyllysine. A phosphoserine mark is found at Ser-132, Ser-167, and Ser-236. Tyr-244 carries the phosphotyrosine modification.

It belongs to the chloride channel CLIC family. As to quaternary structure, monomer. Interacts with HRH3. As to expression, detected in brain, in cell bodies and dendrites of Purkinje cells in cerebellar neurons (at protein level). Expressed neonatal and adult cardiomyocytes (at protein level). Marked expression was found in hippocampus and cerebellum, and in many other tissues.

The protein localises to the cytoplasm. Its subcellular location is the cytoskeleton. It localises to the microtubule organizing center. It is found in the centrosome. The protein resides in the cytoplasmic vesicle membrane. The protein localises to the nucleus. Its subcellular location is the cell membrane. It localises to the mitochondrion. It is found in the cell junction. The protein resides in the endoplasmic reticulum membrane. The enzyme catalyses chloride(in) = chloride(out). It carries out the reaction thiocyanate(in) = thiocyanate(out). The catalysed reaction is nitrate(in) = nitrate(out). It catalyses the reaction iodide(out) = iodide(in). The enzyme catalyses bromide(in) = bromide(out). It carries out the reaction fluoride(in) = fluoride(out). The catalysed reaction is choline(out) = choline(in). Its activity is regulated as follows. Channel activity is redox- and pH-regulated. Anion vs cation selectivity is enhanced when fully oxidized. In terms of biological role, in the soluble state, catalyzes glutaredoxin-like thiol disulfide exchange reactions with reduced glutathione as electron donor. Can insert into membranes and form voltage-dependent multi-ion conductive channels. Membrane insertion seems to be redox-regulated and may occur only under oxidizing conditions. Has alternate cellular functions like a potential role in angiogenesis or in maintaining apical-basolateral membrane polarity during mitosis and cytokinesis. Could also promote endothelial cell proliferation and regulate endothelial morphogenesis (tubulogenesis). Promotes cell-surface expression of HRH3. This is Chloride intracellular channel protein 4 (Clic4) from Rattus norvegicus (Rat).